Here is a 259-residue protein sequence, read N- to C-terminus: Small ribosomal subunit protein uS2 (259 aa).

The interval 224 to 259 is disordered; that stretch reads GKQGEDDQQVAPAEDVAEEVSDESLQDLKNSVEGND. Residues 238-248 show a composition bias toward acidic residues; that stretch reads DVAEEVSDESL. Residues 250-259 are compositionally biased toward polar residues; sequence DLKNSVEGND.

Belongs to the universal ribosomal protein uS2 family.

In Limosilactobacillus fermentum (strain NBRC 3956 / LMG 18251) (Lactobacillus fermentum), this protein is Small ribosomal subunit protein uS2.